Reading from the N-terminus, the 228-residue chain is 7-cyano-7-deazaguanine synthase (228 aa).

ATP is bound at residue 9–19 (LSGGPDSTTVL). The Zn(2+) site is built by Cys-193, Cys-203, Cys-206, and Cys-209.

Belongs to the QueC family. The cofactor is Zn(2+).

It catalyses the reaction 7-carboxy-7-deazaguanine + NH4(+) + ATP = 7-cyano-7-deazaguanine + ADP + phosphate + H2O + H(+). It functions in the pathway purine metabolism; 7-cyano-7-deazaguanine biosynthesis. Its function is as follows. Catalyzes the ATP-dependent conversion of 7-carboxy-7-deazaguanine (CDG) to 7-cyano-7-deazaguanine (preQ(0)). This chain is 7-cyano-7-deazaguanine synthase, found in Rickettsia peacockii (strain Rustic).